We begin with the raw amino-acid sequence, 211 residues long: MFDIGVGELTLIAVVALVVLGPERLPKAARFAGLWVRRARMQWDSVKQELERELEAEELKRSLQDVQASLREAEDQLRNKQQQVEQGARALHDDVSRDIDIRSSATPVATPLELAHADLSASAHVDAAAGAAAGAGPAPAPAAPVIAQAQPIAPAPHQTLVPAPHDTIVPAPHAAHLTSAPAPPVTVAPVDAGTSASPTPSEPTKIQEKQP.

Residues 1 to 21 form a helical membrane-spanning segment; that stretch reads MFDIGVGELTLIAVVALVVLG. Residues 175–211 are disordered; it reads AHLTSAPAPPVTVAPVDAGTSASPTPSEPTKIQEKQP. Polar residues predominate over residues 194–204; that stretch reads TSASPTPSEPT.

The protein belongs to the TatB family. The Tat system comprises two distinct complexes: a TatABC complex, containing multiple copies of TatA, TatB and TatC subunits, and a separate TatA complex, containing only TatA subunits. Substrates initially bind to the TatABC complex, which probably triggers association of the separate TatA complex to form the active translocon.

Its subcellular location is the cell inner membrane. Part of the twin-arginine translocation (Tat) system that transports large folded proteins containing a characteristic twin-arginine motif in their signal peptide across membranes. Together with TatC, TatB is part of a receptor directly interacting with Tat signal peptides. TatB may form an oligomeric binding site that transiently accommodates folded Tat precursor proteins before their translocation. This chain is Sec-independent protein translocase protein TatB, found in Xanthomonas oryzae pv. oryzae (strain MAFF 311018).